We begin with the raw amino-acid sequence, 632 residues long: Extracellular metalloproteinase 2 (632 aa).

The N-terminal stretch at 1-19 (MHGLLLAGLAAALPLGVAG) is a signal peptide. A propeptide spanning residues 20-244 (LPARQQSGLS…VHNVVDYVAS (225 aa)) is cleaved from the precursor. N270 carries an N-linked (GlcNAc...) asparagine glycan. Residue H429 coordinates Zn(2+). Residue E430 is part of the active site. H433 contributes to the Zn(2+) binding site.

It belongs to the peptidase M36 family. It depends on Zn(2+) as a cofactor.

It localises to the secreted. In terms of biological role, secreted metalloproteinase probably acting as a virulence factor. This is Extracellular metalloproteinase 2 (MEP2) from Trichophyton tonsurans (Scalp ringworm fungus).